Consider the following 942-residue polypeptide: Lon protease homolog 4, chloroplastic/mitochondrial (942 aa).

At Ser54 the chain carries Phosphoserine. In terms of domain architecture, Lon N-terminal spans 79–301 (VIALPLPHKP…LTLELVKKEV (223 aa)). 456 to 463 (GPTGVGKT) contributes to the ATP binding site. The disordered stretch occupies residues 673 to 725 (ISDDVTTDTEETKSLAKTDLESPETSAEGSTVLTDELATGDPTESTTEQSGEV). Over residues 682-692 (EETKSLAKTDL) the composition is skewed to basic and acidic residues. The segment covering 695–705 (PETSAEGSTVL) has biased composition (polar residues). The Lon proteolytic domain maps to 756–940 (QTPVGVVMGL…EQIFELAFGY (185 aa)). Active-site residues include Ser846 and Lys889.

It belongs to the peptidase S16 family. Homohexamer or homoheptamer. Organized in a ring with a central cavity.

It is found in the mitochondrion matrix. It localises to the plastid. The protein resides in the chloroplast thylakoid membrane. It catalyses the reaction Hydrolysis of proteins in presence of ATP.. Functionally, ATP-dependent serine protease that mediates the selective degradation of misfolded, unassembled or oxidatively damaged polypeptides as well as certain short-lived regulatory proteins in the mitochondrial matrix. May also have a chaperone function in the assembly of inner membrane protein complexes. Participates in the regulation of mitochondrial gene expression and in the maintenance of the integrity of the mitochondrial genome. Binds to mitochondrial DNA in a site-specific manner. The polypeptide is Lon protease homolog 4, chloroplastic/mitochondrial (LON4) (Arabidopsis thaliana (Mouse-ear cress)).